Reading from the N-terminus, the 658-residue chain is UvrABC system protein B (658 aa).

The region spanning 26–413 is the Helicase ATP-binding domain; that stretch reads EGINSGKKKQ…SPEVIEQIIR (388 aa). 39 to 46 is an ATP binding site; the sequence is GATGTGKT. The Beta-hairpin signature appears at 92–115; sequence YYDYYQPEAYVPQTDTFIEKDAQI. In terms of domain architecture, Helicase C-terminal spans 430–596; sequence QIDDLLGEIQ…TIQKGVRDVI (167 aa). Positions 622–657 constitute a UVR domain; it reads EKTIAKMEAEMKEAAKALDFERAAELRDLLLELKAE.

It belongs to the UvrB family. As to quaternary structure, forms a heterotetramer with UvrA during the search for lesions. Interacts with UvrC in an incision complex.

It is found in the cytoplasm. Its function is as follows. The UvrABC repair system catalyzes the recognition and processing of DNA lesions. A damage recognition complex composed of 2 UvrA and 2 UvrB subunits scans DNA for abnormalities. Upon binding of the UvrA(2)B(2) complex to a putative damaged site, the DNA wraps around one UvrB monomer. DNA wrap is dependent on ATP binding by UvrB and probably causes local melting of the DNA helix, facilitating insertion of UvrB beta-hairpin between the DNA strands. Then UvrB probes one DNA strand for the presence of a lesion. If a lesion is found the UvrA subunits dissociate and the UvrB-DNA preincision complex is formed. This complex is subsequently bound by UvrC and the second UvrB is released. If no lesion is found, the DNA wraps around the other UvrB subunit that will check the other stand for damage. The protein is UvrABC system protein B of Bacillus anthracis.